The chain runs to 237 residues: Lectin alpha chain (237 aa).

Mn(2+) is bound by residues Glu-8 and Asp-10. Residues Asp-10, Tyr-12, Asn-14, and Asp-19 each contribute to the Ca(2+) site. Tyr-12 is an a carbohydrate binding site. Positions 19, 24, and 34 each coordinate Mn(2+). 99–100 (LY) is an a carbohydrate binding site. Residue Asp-208 coordinates Ca(2+). Arg-228 serves as a coordination point for a carbohydrate.

It belongs to the leguminous lectin family. In terms of assembly, equilibrium between homodimer and homotetramer. Oligomerization is pH-dependent with homotetramers forming at pH 6.5 and above. Post-translationally, the beta and gamma chains are produced by partial proteolytic processing of the lectin alpha chain by an asparaginyl endopeptidase. Mixture of 60% alpha lectin and 40% of its beta and gamma proteolytic fragments. In terms of tissue distribution, seed.

The protein localises to the vacuole. It is found in the aleurone grain. Functionally, D-mannose/D-glucose-binding lectin. Induces histamine release in mast cells from hamster and rat. Induces lymphocyte proliferation and IFNG production. The polypeptide is Lectin alpha chain (Macropsychanthus bicolor (Dioclea rostrata)).